The primary structure comprises 91 residues: Probable Fe(2+)-trafficking protein (91 aa).

This sequence belongs to the Fe(2+)-trafficking protein family.

Could be a mediator in iron transactions between iron acquisition and iron-requiring processes, such as synthesis and/or repair of Fe-S clusters in biosynthetic enzymes. In Burkholderia mallei (strain NCTC 10247), this protein is Probable Fe(2+)-trafficking protein.